A 182-amino-acid chain; its full sequence is Organic solute transporter subunit beta (182 aa).

The signal sequence occupies residues 1-20 (MSGLLKYLFGCFILCLLLQG). At 21–64 (KTHMTSATISKPHETIDIEKQNMTGERNSTLAQQLSFPMEDPTN) the chain is on the extracellular side. N42 and N48 each carry an N-linked (GlcNAc...) asparagine glycan. A helical transmembrane segment spans residues 65-85 (WNYAILALAFVVLFLAFLILA). Residues 86–182 (QNSRANRTRK…LYTDSKEDDV (97 aa)) are Cytoplasmic-facing.

This sequence belongs to the OST-beta family. Interacts with slc51a. The Ost-alpha/Ost-beta complex is a heterodimer composed of alpha (slc51a) and beta (slc51b) subunit; may induce the transport of slc51a from the endoplasmic reticulum to the plasma membrane. As to expression, expressed in liver.

It is found in the cell membrane. Functionally, essential component of the Ost-alpha/Ost-beta complex, a heterodimer that acts as the intestinal basolateral transporter responsible for bile acid export from enterocytes into portal blood. Efficiently transports the major species of bile acids. May modulate slc51a glycosylation, membrane trafficking and stability activities. Able to transport taurocholate, estrone sulfate, digoxin, and prostaglandin E(2), but not p-aminohippurate or S-dinitrophenyl glutathione. The chain is Organic solute transporter subunit beta (slc51b) from Leucoraja erinaceus (Little skate).